Consider the following 924-residue polypeptide: Phosphatidate phosphatase LPIN1 (924 aa).

Positions 1 to 108 (MNYVGQLAGQ…IPMYLATSPI (108 aa)) are N-LIP. Phosphoserine occurs at positions 106 and 150. Disordered regions lie at residues 133–248 (PTTA…DCQR) and 269–297 (FHASESPSGSRPSTPKSDSELVSKSADRL). The span at 152–161 (GKKRRKRRRK) shows a compositional bias: basic residues. The Nuclear localization signal signature appears at 153–158 (KKRRKR). Positions 162–172 (AQLDNLKRDDN) are enriched in basic and acidic residues. Residues 176–193 (SEDEDMFPIEMSSDEDTA) are compositionally biased toward acidic residues. 2 stretches are compositionally biased toward polar residues: residues 218 to 229 (PSISTHPQSASY) and 273 to 284 (ESPSGSRPSTPK). Serine 285, serine 287, and serine 293 each carry phosphoserine. Residues 285-297 (SDSELVSKSADRL) show a composition bias toward basic and acidic residues. Position 298 is a phosphothreonine (threonine 298). Disordered stretches follow at residues 314–426 (QAAK…SRHL) and 446–490 (LYFP…STSD). Residue serine 328 is modified to Phosphoserine. Over residues 343–358 (AIHSESSDTFSDQSPT) the composition is skewed to polar residues. A Phosphoserine modification is found at serine 392. Residues 404–413 (NTAQSSSKTD) show a composition bias toward polar residues. At lysine 459 the chain carries N6-acetyllysine. A compositionally biased stretch (polar residues) spans 461–476 (ASDNGARSANQSPQSV). Residues serine 468, serine 472, and serine 483 each carry the phosphoserine modification. Residues lysine 599 and lysine 629 each participate in a glycyl lysine isopeptide (Lys-Gly) (interchain with G-Cter in SUMO) cross-link. The segment at 627–649 (RIKHESSSSDEEHAAAKPSGSSH) is disordered. Positions 628–641 (IKHESSSSDEEHAA) are enriched in basic and acidic residues. The residue at position 629 (lysine 629) is an N6-acetyllysine. Phosphoserine occurs at positions 634 and 635. The segment at 658-864 (YKKTLRLTSE…VNPKGELVQE (207 aa)) is C-LIP. The short motif at 712 to 716 (DIDGT) is the DXDXT motif element. Positions 723-727 (LGHIL) match the LXXIL motif motif. A phosphoserine mark is found at serine 921 and serine 923.

Belongs to the lipin family. Interacts (via LXXIL motif) with PPARA. Interacts with PPARGC1A. Interaction with PPARA and PPARGC1A leads to the formation of a complex that modulates gene transcription. Interacts with MEF2C. Mg(2+) serves as cofactor. Post-translationally, phosphorylated at multiple sites in response to insulin. Phosphorylation is controlled by the mTOR signaling pathway. Phosphorylation is decreased by epinephrine. Phosphorylation may not directly affect the catalytic activity but may regulate the localization. Dephosphorylated by the CTDNEP1-CNEP1R1 complex. In terms of processing, phosphorylated at multiple sites by mTOR in response to insulin, leading to its inactivation. Phosphorylation does not affect the catalytic activity but regulates the localization. Phosphorylation is decreased by epinephrine. Dephosphorylated by the CTDNEP1-CNEP1R1 complex. Dephosphorylation following mTOR inhibition promotes its activity. Sumoylation is important in brain and is marginal in other tissues. Sumoylation facilitates nuclear localization of isoform 2 in neuronals cells and its transcriptional coactivator activity. Post-translationally, acetylation at Lys-459 and Lys-629 by KAT5 in response to fatty acids promotes translocation to the endoplasmic reticulum and synthesis of diacylglycerol. Specifically expressed in skeletal muscle. Also expressed prominently in adipose tissue, and testis. Lower expression also detected in kidney, lung, brain and liver. As to expression, predominant isoform in the liver. In terms of tissue distribution, predominant isoform in the brain.

Its subcellular location is the mitochondrion outer membrane. It localises to the cytoplasm. The protein resides in the nucleus membrane. The protein localises to the nucleus. It is found in the endoplasmic reticulum membrane. It catalyses the reaction a 1,2-diacyl-sn-glycero-3-phosphate + H2O = a 1,2-diacyl-sn-glycerol + phosphate. The enzyme catalyses 1-octadecanoyl-2-(4Z,7Z,10Z,13Z,16Z,19Z-docosahexaenoyl)-sn-glycero-3-phosphate + H2O = 1-octadecanoyl-2-(4Z,7Z,10Z,13Z,16Z,19Z-docosahexaenoyl)-sn-glycerol + phosphate. The catalysed reaction is 1-octadecanoyl-2-(5Z,8Z,11Z,14Z-eicosatetraenoyl)-sn-glycero-3-phosphate + H2O = 1-octadecanoyl-2-(5Z,8Z,11Z,14Z-eicosatetraenoyl)-sn-glycerol + phosphate. It carries out the reaction 1-octadecanoyl-2-(9Z,12Z-octadecadienoyl)-sn-glycero-3-phosphate + H2O = 1-octadecanoyl-2-(9Z,12Z)-octadecadienoyl-sn-glycerol + phosphate. It catalyses the reaction 1-octadecanoyl-2-(9Z-octadecenoyl)-sn-glycero-3-phosphate + H2O = 1-octadecanoyl-2-(9Z-octadecenoyl)-sn-glycerol + phosphate. The enzyme catalyses 1-hexadecanoyl-2-(4Z,7Z,10Z,13Z,16Z,19Z-docosahexaenoyl)-sn-glycero-3-phosphate + H2O = 1-hexadecanoyl-2-(4Z,7Z,10Z,13Z,16Z,19Z-docosahexaenoyl)-sn-glycerol + phosphate. The catalysed reaction is 1,2-dioctadecanoyl-sn-glycero-3-phosphate + H2O = 1,2-dioctadecanoyl-sn-glycerol + phosphate. It carries out the reaction 1-hexadecanoyl-2-(5Z,8Z,11Z,14Z-eicosatetraenoyl)-sn-glycero-3-phosphate + H2O = 1-hexadecanoyl-2-(5Z,8Z,11Z,14Z-eicosatetraenoyl)-sn-glycerol + phosphate. It catalyses the reaction 1-hexadecanoyl-2-(9Z,12Z-octadecadienoyl)-sn-glycero-3-phosphate + H2O = 1-hexadecanoyl-2-(9Z,12Z-octadecadienoyl)-sn-glycerol + phosphate. The enzyme catalyses 1-hexadecanoyl-2-(9Z-octadecenoyl)-sn-glycero-3-phosphate + H2O = 1-hexadecanoyl-2-(9Z-octadecenoyl)-sn-glycerol + phosphate. The catalysed reaction is 1,2-di-(4Z,7Z,10Z,13Z,16Z,19Z-docosahexaenoyl)-sn-glycero-3-phosphate + H2O = 1,2-di-(4Z,7Z,10Z,13Z,16Z,19Z-docosahexaenoyl)-sn-glycerol + phosphate. It carries out the reaction 1,2-di-(5Z,8Z,11Z,14Z)-eicosatetraenoyl-sn-glycero-3-phosphate + H2O = 1,2-di-(5Z,8Z,11Z,14Z)-eicosatetraenoyl-sn-glycerol + phosphate. It catalyses the reaction 1,2-di-(9Z,12Z-octadecadienoyl)-sn-glycero-3-phosphate + H2O = 1,2-di-(9Z,12Z-octadecadienoyl)-sn-glycerol + phosphate. The enzyme catalyses 1,2-di-(9Z-octadecenoyl)-sn-glycero-3-phosphate + H2O = 1,2-di-(9Z-octadecenoyl)-sn-glycerol + phosphate. The catalysed reaction is 1,2-dihexadecanoyl-sn-glycero-3-phosphate + H2O = 1,2-dihexadecanoyl-sn-glycerol + phosphate. Inhibited by N-ethylmaleimide treatment. Acts as a magnesium-dependent phosphatidate phosphatase enzyme which catalyzes the conversion of phosphatidic acid to diacylglycerol during triglyceride, phosphatidylcholine and phosphatidylethanolamine biosynthesis and therefore controls the metabolism of fatty acids at different levels. Is involved in adipocyte differentiation. Also acts as nuclear transcriptional coactivator for PPARGC1A/PPARA regulatory pathway to modulate lipid metabolism gene expression. In terms of biological role, recruited at the mitochondrion outer membrane and is involved in mitochondrial fission by converting phosphatidic acid to diacylglycerol. This chain is Phosphatidate phosphatase LPIN1 (Lpin1), found in Mus musculus (Mouse).